The sequence spans 403 residues: MANITLKPLCPLLEEMVQLPNHSNSSLRYIDHVSVLLHGLASLLGLVENGLILFVVGCRMRQTVVTTWVLHLALSDLLAAASLPFFTYFLAVGHSWELGTTFCKLHSSVFFLNMFASGFLLSAISLDRCLQVVRPVWAQNHRTVAAAHRVCLMLWALAVLNTVPYFVFRDTIPRRDGRIMCYYNMLLLNPGSDRDTTCDYRQKALAVSKFLLAFMVPLAIIASSHVAVSLQLHHRGRQRTGRFVRLVAAIVVAFILCWGPYHIFSLLEARAHSVTTLRQLASRGLPFVTSLAFFNSVVNPLLYVLTCPDMLHKLRRSLLTVLESVLVEDSDLSTGPGKRCRRRHRRRASSTTTPASTLLLADRFPQLRPARLIGWMRRGSAELPRRVREQSQEKQGSLSCTLD.

At M1–S34 the chain is on the extracellular side. Residues N3, N21, and N24 are each glycosylated (N-linked (GlcNAc...) asparagine). A helical membrane pass occupies residues V35–V55. Residues V56–H71 are Cytoplasmic-facing. Residues L72 to V92 traverse the membrane as a helical segment. Residues G93–K104 lie on the Extracellular side of the membrane. The cysteines at positions 103 and 198 are disulfide-linked. A helical transmembrane segment spans residues L105–S125. Residues L126–A147 are Cytoplasmic-facing. A helical transmembrane segment spans residues H148 to F168. Over R169–K209 the chain is Extracellular. A helical transmembrane segment spans residues F210–L230. At Q231–R245 the chain is on the cytoplasmic side. The chain crosses the membrane as a helical span at residues L246–L266. The Extracellular segment spans residues L267 to G284. The helical transmembrane segment at L285 to L305 threads the bilayer. Over T306–D403 the chain is Cytoplasmic. The short motif at D329–L332 is the Involved in the recycling of CRTH2 element. Residue S330 is modified to Phosphoserine. Disordered regions lie at residues L332–T353 and P384–D403. A compositionally biased stretch (basic residues) spans K338–A348. Phosphoserine is present on S349. Over residues E393–D403 the composition is skewed to polar residues.

It belongs to the G-protein coupled receptor 1 family. Phosphorylated.

The protein localises to the cell membrane. Receptor for prostaglandin D2 (PGD2). Coupled to the G(i)-protein. Receptor activation may result in pertussis toxin-sensitive decreases in cAMP levels and Ca(2+) mobilization. PI3K signaling is also implicated in mediating PTGDR2 effects. PGD2 induced receptor internalization. CRTH2 internalization can be regulated by diverse kinases such as, PKC, PKA, GRK2, GPRK5/GRK5 and GRK6. Receptor activation is responsible, at least in part, in immune regulation and allergic/inflammation responses. The polypeptide is Prostaglandin D2 receptor 2 (Ptgdr2) (Rattus norvegicus (Rat)).